A 348-amino-acid polypeptide reads, in one-letter code: Chemokine C-C motif receptor-like 2 (348 aa).

Residues 1–43 (MANYTPAPEDDYDVFIEDDLSDDEIEPCTPYDPKILSAQLVPY) lie on the Extracellular side of the membrane. The helical transmembrane segment at 44 to 64 (LYTTVFMVGLLDNILVVFILV) threads the bilayer. The Cytoplasmic segment spans residues 65–76 (KYKGLRQAENMS). Residues 77 to 97 (FLNLALSNLGFLLTLPFWAYA) form a helical membrane-spanning segment. Topologically, residues 98-110 (ASHGEGFDDPLCK) are extracellular. A disulfide bridge connects residues Cys-109 and Cys-187. The helical transmembrane segment at 111–131 (ILLLLYSIGLYSEAFFNVLLT) threads the bilayer. Residues 132–150 (VQRYKEFFHVRRRFSACRT) are Cytoplasmic-facing. The chain crosses the membrane as a helical span at residues 151–171 (VAGSIFISVLVWVTATLVTLP). The Extracellular segment spans residues 172-204 (ELVSYKPQMQSQKYKCFFTGLHFLPADETFWKH). A helical membrane pass occupies residues 205–225 (FLTLKMNILGFLLPLFAFVYC). The Cytoplasmic portion of the chain corresponds to 226-244 (YVRMRKTLQFRERNYGLFK). The helical transmembrane segment at 245–265 (LVFTIMAVFLLMWGPYNIVLF) threads the bilayer. Topologically, residues 266-292 (LSAFNEHFSLHGCGSSYNLNKSVQITR) are extracellular. The N-linked (GlcNAc...) asparagine glycan is linked to Asn-285. The helical transmembrane segment at 293–313 (IIAATHCCVNPLLYVFLDKAF) threads the bilayer. The Cytoplasmic portion of the chain corresponds to 314-348 (RKHLCHLFYLCSDTAPQPTEEPAQGASGEEYHLSS).

Belongs to the G-protein coupled receptor 1 family.

It is found in the cell membrane. Its function is as follows. Receptor for CCL19 and chemerin/RARRES2. Does not appear to be a signaling receptor, but may have a role in modulating chemokine-triggered immune responses by capturing and internalizing CCL19 or by presenting RARRES2 ligand to CMKLR1, a functional signaling receptor. Plays a critical role for the development of Th2 responses. The protein is Chemokine C-C motif receptor-like 2 (CCRL2) of Bos taurus (Bovine).